The primary structure comprises 594 residues: Trehalase (594 aa).

The signal sequence occupies residues 1–27 (MDFLNKKIQKILFICILSFLIVNLTKS). N-linked (GlcNAc...) asparagine glycans are attached at residues Asn56, Asn70, Asn97, and Asn166. Residues Arg190, 197-198 (WD), and Asn234 contribute to the substrate site. Asn242 carries an N-linked (GlcNAc...) asparagine glycan. 243 to 245 (RSQ) is a substrate binding site. N-linked (GlcNAc...) asparagine glycosylation is found at Asn261 and Asn305. Residues 312 to 314 (RPE) and Gly346 contribute to the substrate site. Catalysis depends on Asp348, which acts as the Proton donor/acceptor. N-linked (GlcNAc...) asparagine glycosylation is found at Asn361, Asn395, Asn513, and Asn537. Residue Glu549 is the Proton donor/acceptor of the active site. Glu564 contributes to the substrate binding site.

The protein belongs to the glycosyl hydrolase 37 family.

The catalysed reaction is alpha,alpha-trehalose + H2O = alpha-D-glucose + beta-D-glucose. The sequence is that of Trehalase (treh) from Dictyostelium discoideum (Social amoeba).